A 151-amino-acid chain; its full sequence is UPF0208 membrane protein ESA_00924 (151 aa).

The next 2 helical transmembrane spans lie at 46-65 (FAIR…QIAL) and 69-91 (LGPA…WWLG).

It belongs to the UPF0208 family.

The protein resides in the cell inner membrane. In Cronobacter sakazakii (strain ATCC BAA-894) (Enterobacter sakazakii), this protein is UPF0208 membrane protein ESA_00924.